The primary structure comprises 498 residues: Serine hydroxymethyltransferase, mitochondrial (498 aa).

K273 is modified (N6-(pyridoxal phosphate)lysine).

It belongs to the SHMT family. In terms of assembly, homotetramer. The cofactor is pyridoxal 5'-phosphate.

It is found in the mitochondrion. It catalyses the reaction (6R)-5,10-methylene-5,6,7,8-tetrahydrofolate + glycine + H2O = (6S)-5,6,7,8-tetrahydrofolate + L-serine. It participates in one-carbon metabolism; tetrahydrofolate interconversion. In terms of biological role, interconversion of serine and glycine. The protein is Serine hydroxymethyltransferase, mitochondrial (SHM1) of Kluyveromyces lactis (strain ATCC 8585 / CBS 2359 / DSM 70799 / NBRC 1267 / NRRL Y-1140 / WM37) (Yeast).